A 785-amino-acid chain; its full sequence is Endonuclease MutS2 (785 aa).

334 to 341 (GPNTGGKT) is an ATP binding site. Positions 710-785 (LDLRGKRYEE…GNGATIVHFK (76 aa)) constitute a Smr domain.

It belongs to the DNA mismatch repair MutS family. MutS2 subfamily. Homodimer. Binds to stalled ribosomes, contacting rRNA.

Functionally, endonuclease that is involved in the suppression of homologous recombination and thus may have a key role in the control of bacterial genetic diversity. In terms of biological role, acts as a ribosome collision sensor, splitting the ribosome into its 2 subunits. Detects stalled/collided 70S ribosomes which it binds and splits by an ATP-hydrolysis driven conformational change. Acts upstream of the ribosome quality control system (RQC), a ribosome-associated complex that mediates the extraction of incompletely synthesized nascent chains from stalled ribosomes and their subsequent degradation. Probably generates substrates for RQC. This chain is Endonuclease MutS2, found in Pediococcus pentosaceus (strain ATCC 25745 / CCUG 21536 / LMG 10740 / 183-1w).